The primary structure comprises 133 residues: GVTFDDGAYTGIREINFEYNSETAIGGLRVTYDLNGMPFVAEDHKSFITGFKPVKISLEFPSEYIVEVSGYVGKVEGYTVIRSLTFKTNKQTYGPYGVTNGTPFSLPIENGLIVGFKGSIGYWLDYFSIYLSL.

Residues 1–133 (GVTFDDGAYT…LDYFSIYLSL (133 aa)) enclose the Jacalin-type lectin domain.

The protein belongs to the jacalin lectin family. As to quaternary structure, formed of four alpha chains and four beta chains.

Functionally, D-galactose-specific lectin, binds the T-antigen structure Gal-beta1,3-GalNAc. This chain is Agglutinin alpha chain, found in Maclura pomifera (Osage orange).